Reading from the N-terminus, the 250-residue chain is ATP synthase subunit a (250 aa).

The next 5 membrane-spanning stretches (helical) occupy residues 27–47, 83–103, 129–149, 191–211, and 219–239; these read TDTVLSTAIAALIVLALAFYL, IAPFVLPLAVTIFVFILISNW, INYVLALALFVFVCYHAAGIW, IFAGGILVALIALFPPYIMWA, and FDLFVGAIQAFIFALLTILYF.

Belongs to the ATPase A chain family. As to quaternary structure, F-type ATPases have 2 components, CF(1) - the catalytic core - and CF(0) - the membrane proton channel. CF(1) has five subunits: alpha(3), beta(3), gamma(1), delta(1), epsilon(1). CF(0) has three main subunits: a(1), b(2) and c(9-12). The alpha and beta chains form an alternating ring which encloses part of the gamma chain. CF(1) is attached to CF(0) by a central stalk formed by the gamma and epsilon chains, while a peripheral stalk is formed by the delta and b chains.

It is found in the cell membrane. Functionally, key component of the proton channel; it plays a direct role in the translocation of protons across the membrane. The chain is ATP synthase subunit a from Mycobacterium marinum (strain ATCC BAA-535 / M).